A 788-amino-acid polypeptide reads, in one-letter code: Endonuclease MutS2 (788 aa).

An ATP-binding site is contributed by 332–339; it reads GPNTGGKT. One can recognise a Smr domain in the interval 713–788; the sequence is VDLRGMDAEE…GTGVTVVELK (76 aa).

It belongs to the DNA mismatch repair MutS family. MutS2 subfamily. As to quaternary structure, homodimer. Binds to stalled ribosomes, contacting rRNA.

In terms of biological role, endonuclease that is involved in the suppression of homologous recombination and thus may have a key role in the control of bacterial genetic diversity. Functionally, acts as a ribosome collision sensor, splitting the ribosome into its 2 subunits. Detects stalled/collided 70S ribosomes which it binds and splits by an ATP-hydrolysis driven conformational change. Acts upstream of the ribosome quality control system (RQC), a ribosome-associated complex that mediates the extraction of incompletely synthesized nascent chains from stalled ribosomes and their subsequent degradation. Probably generates substrates for RQC. The polypeptide is Endonuclease MutS2 (Clostridium botulinum (strain Okra / Type B1)).